Here is a 54-residue protein sequence, read N- to C-terminus: Potassium channel toxin alpha-KTx 14.x (54 aa).

The N-terminal stretch at 1–23 (MKIFFAILLILAVCSMAIWTVNG) is a signal peptide. Intrachain disulfides connect Cys30-Cys46, Cys36-Cys51, and Cys40-Cys53.

This sequence belongs to the short scorpion toxin superfamily. Potassium channel inhibitor family. Alpha-KTx 14 subfamily. Expressed by the venom gland.

It localises to the secreted. Its function is as follows. Potassium channels inhibitor. The sequence is that of Potassium channel toxin alpha-KTx 14.x from Olivierus martensii (Manchurian scorpion).